The sequence spans 191 residues: Cathelicidin-related peptide Oh-Cath (191 aa).

An N-terminal signal peptide occupies residues 1-22 (MEGFFWKTLLVVGALAIGGTSS). A propeptide spanning residues 23-161 (LPHKPLTYEE…DQPRRVKRFK (139 aa)) is cleaved from the precursor. Cystine bridges form between C81/C92 and C103/C120. A compositionally biased stretch (acidic residues) spans 125–151 (EEEEQKQEEGNEEEKEVEKEEKEEDEK). The disordered stretch occupies residues 125 to 154 (EEEEQKQEEGNEEEKEVEKEEKEEDEKDQP).

Belongs to the cathelicidin family. In terms of tissue distribution, expressed by the venom gland.

The protein localises to the secreted. Its subcellular location is the target cell membrane. In terms of biological role, potent antimicrobial peptide against Gram-negative (MIC=0.25 ug/ml against E.coli ATCC 25922, MIC=0.5 ug/ml against P.aeruginosa) and Gram-positive bacteria (MIC=64 ug/ml against E.faecalis, MIC=64 ug/ml against S.aureus). Adopts an amphipathic alpha helical conformation, that may allow to partition into the target membrane. Low hemolytic activities have been observed on mammalian cells. In Ophiophagus hannah (King cobra), this protein is Cathelicidin-related peptide Oh-Cath.